The chain runs to 347 residues: Protein RecA (347 aa).

65-72 (GPESSGKT) serves as a coordination point for ATP.

This sequence belongs to the RecA family.

Its subcellular location is the cytoplasm. Can catalyze the hydrolysis of ATP in the presence of single-stranded DNA, the ATP-dependent uptake of single-stranded DNA by duplex DNA, and the ATP-dependent hybridization of homologous single-stranded DNAs. It interacts with LexA causing its activation and leading to its autocatalytic cleavage. This chain is Protein RecA, found in Stutzerimonas stutzeri (Pseudomonas stutzeri).